Consider the following 327-residue polypeptide: AA9 family lytic polysaccharide monooxygenase G (327 aa).

Positions 1–20 (MKLNLASLCFLASIAPLVSG) are cleaved as a signal peptide. Cu(2+)-binding residues include histidine 21 and histidine 96. A disulfide bridge links cysteine 62 with cysteine 185. Histidine 172 is a binding site for O2. Residue tyrosine 182 participates in Cu(2+) binding. Asparagine 290 carries N-linked (GlcNAc...) asparagine glycosylation. The CBM1 domain occupies 291–327 (GTIKKYYQCGGQGWTGSGSCEAGTSCREWNTWYFQCV).

The protein belongs to the polysaccharide monooxygenase AA9 family. Requires Cu(2+) as cofactor.

It is found in the secreted. The enzyme catalyses [(1-&gt;4)-beta-D-glucosyl]n+m + reduced acceptor + O2 = 4-dehydro-beta-D-glucosyl-[(1-&gt;4)-beta-D-glucosyl]n-1 + [(1-&gt;4)-beta-D-glucosyl]m + acceptor + H2O.. Functionally, lytic polysaccharide monooxygenase (LPMO) that depolymerizes crystalline and amorphous polysaccharides via the oxidation of scissile alpha- or beta-(1-4)-glycosidic bonds, yielding C1 or C4 oxidation products. Catalysis by LPMOs requires the reduction of the active-site copper from Cu(II) to Cu(I) by a reducing agent and H(2)O(2) or O(2) as a cosubstrate. This Aspergillus tamarii protein is AA9 family lytic polysaccharide monooxygenase G.